The primary structure comprises 264 residues: Purine nucleoside phosphorylase slr1573 (264 aa).

Zn(2+) contacts are provided by His61, Cys104, and His121.

Belongs to the purine nucleoside phosphorylase YfiH/LACC1 family. As to quaternary structure, homodimer. It depends on Cu(2+) as a cofactor. Zn(2+) is required as a cofactor.

The catalysed reaction is adenosine + phosphate = alpha-D-ribose 1-phosphate + adenine. It carries out the reaction S-methyl-5'-thioadenosine + phosphate = 5-(methylsulfanyl)-alpha-D-ribose 1-phosphate + adenine. It catalyses the reaction inosine + phosphate = alpha-D-ribose 1-phosphate + hypoxanthine. The enzyme catalyses adenosine + H2O + H(+) = inosine + NH4(+). Its function is as follows. Purine nucleoside enzyme that catalyzes the phosphorolysis of adenosine and inosine nucleosides, yielding D-ribose 1-phosphate and the respective free bases, adenine and hypoxanthine. Also catalyzes the phosphorolysis of S-methyl-5'-thioadenosine into adenine and S-methyl-5-thio-alpha-D-ribose 1-phosphate. Also has adenosine deaminase activity. This Synechocystis sp. (strain ATCC 27184 / PCC 6803 / Kazusa) protein is Purine nucleoside phosphorylase slr1573.